Consider the following 353-residue polypeptide: Dihydroorotate dehydrogenase (quinone) (353 aa).

FMN is bound by residues 67-71 (AGFDK) and T91. K71 contacts substrate. 116 to 120 (NRMGF) is a substrate binding site. Residues N144 and N177 each contribute to the FMN site. Residue N177 participates in substrate binding. The Nucleophile role is filled by S180. N182 contributes to the substrate binding site. 2 residues coordinate FMN: K215 and T243. 244-245 (NT) lines the substrate pocket. FMN-binding positions include G264, G293, and 314 to 315 (YT).

This sequence belongs to the dihydroorotate dehydrogenase family. Type 2 subfamily. As to quaternary structure, monomer. It depends on FMN as a cofactor.

It is found in the cell membrane. It carries out the reaction (S)-dihydroorotate + a quinone = orotate + a quinol. The protein operates within pyrimidine metabolism; UMP biosynthesis via de novo pathway; orotate from (S)-dihydroorotate (quinone route): step 1/1. Catalyzes the conversion of dihydroorotate to orotate with quinone as electron acceptor. This Gloeobacter violaceus (strain ATCC 29082 / PCC 7421) protein is Dihydroorotate dehydrogenase (quinone).